We begin with the raw amino-acid sequence, 450 residues long: Hydrolase ffsE (450 aa).

Serine 266 acts as the Nucleophile in catalysis.

It belongs to the AB hydrolase superfamily. FUS2 hydrolase family. Homodimer.

The protein operates within mycotoxin biosynthesis. Hydrolase; part of the gene cluster that mediates the biosynthesis of the cytotoxic leucine-containing cytochalasans, including aspochalasin C, aspochalasin E, TMC-169, flavichalasine F, aspergillin PZ, aspochalasin M and flavichalasine G. The first step in the pathway is catalyzed by the hybrid PKS-NRPS ffsA that utilizes 8 units of malonyl-CoA to iteratively assemble the octaketide chain before addition of L-leucine by the C-terminal NRPS modules. Because ffsA lacks a designated enoylreductase (ER) domain, the required activity is provided the enoyl reductase fssC. The methyltransferase (MT) domain of ffsA catalyzes the alpha-methylation at C10 and C14 using S-adenosyl-L-methionine as the methyl-donating cosubstrate. Reduction by the hydrolyase ffsE, followed by dehydration and intra-molecular Diels-Alder cyclization by the Diels-Alderase ffsF then yield the required isoindolone-fused macrocycle. A number of oxidative steps catalyzed by the tailoring cytochrome P450 monooxygenase ffsD, the FAD-linked oxidoreductase ffsJ and the short-chain dehydrogenase/reductase ffsI, are further required to afford the final products. This is Hydrolase ffsE from Aspergillus flavipes.